The primary structure comprises 486 residues: Differentially expressed in FDCP 8 homolog (486 aa).

The disordered stretch occupies residues Met-1 to Trp-26. 2 consecutive Phorbol-ester/DAG-type zinc fingers follow at residues Gly-160–Cys-212 and Ile-393–Cys-459.

It belongs to the DEF8 family.

This is Differentially expressed in FDCP 8 homolog from Caenorhabditis elegans.